A 241-amino-acid polypeptide reads, in one-letter code: Lipopolysaccharide export system ATP-binding protein LptB (241 aa).

The ABC transporter domain maps to L5 to D237. G37–T44 is an ATP binding site.

Belongs to the ABC transporter superfamily. Outer membrane lipopolysaccharide export (TC 1.B.42) family. As to quaternary structure, component of the lipopolysaccharide transport and assembly complex. The LptBFG transporter is composed of two ATP-binding proteins (LptB) and two transmembrane proteins (LptF and LptG).

The protein localises to the cytoplasm. Its subcellular location is the cell inner membrane. Its function is as follows. Part of the ABC transporter complex LptBFG involved in the translocation of lipopolysaccharide (LPS) from the inner membrane to the outer membrane. Probably responsible for energy coupling to the transport system. This chain is Lipopolysaccharide export system ATP-binding protein LptB (lptB), found in Acidithiobacillus ferridurans.